Here is a 728-residue protein sequence, read N- to C-terminus: 1,4-alpha-glucan branching enzyme GlgB (728 aa).

Catalysis depends on Asp-405, which acts as the Nucleophile. Residue Glu-458 is the Proton donor of the active site.

Belongs to the glycosyl hydrolase 13 family. GlgB subfamily. As to quaternary structure, monomer.

The enzyme catalyses Transfers a segment of a (1-&gt;4)-alpha-D-glucan chain to a primary hydroxy group in a similar glucan chain.. It functions in the pathway glycan biosynthesis; glycogen biosynthesis. Its function is as follows. Catalyzes the formation of the alpha-1,6-glucosidic linkages in glycogen by scission of a 1,4-alpha-linked oligosaccharide from growing alpha-1,4-glucan chains and the subsequent attachment of the oligosaccharide to the alpha-1,6 position. This chain is 1,4-alpha-glucan branching enzyme GlgB, found in Shigella boydii serotype 4 (strain Sb227).